A 240-amino-acid polypeptide reads, in one-letter code: Pyridoxine 5'-phosphate synthase (240 aa).

Residue asparagine 7 coordinates 3-amino-2-oxopropyl phosphate. 1-deoxy-D-xylulose 5-phosphate is bound at residue 9-10; the sequence is DH. Arginine 18 provides a ligand contact to 3-amino-2-oxopropyl phosphate. Histidine 43 functions as the Proton acceptor in the catalytic mechanism. Residues arginine 45 and histidine 50 each coordinate 1-deoxy-D-xylulose 5-phosphate. Glutamate 70 (proton acceptor) is an active-site residue. Threonine 100 contributes to the 1-deoxy-D-xylulose 5-phosphate binding site. Residue histidine 191 is the Proton donor of the active site. Residues glycine 192 and 213-214 each bind 3-amino-2-oxopropyl phosphate; that span reads GH.

The protein belongs to the PNP synthase family. Homooctamer; tetramer of dimers.

The protein resides in the cytoplasm. It carries out the reaction 3-amino-2-oxopropyl phosphate + 1-deoxy-D-xylulose 5-phosphate = pyridoxine 5'-phosphate + phosphate + 2 H2O + H(+). It participates in cofactor biosynthesis; pyridoxine 5'-phosphate biosynthesis; pyridoxine 5'-phosphate from D-erythrose 4-phosphate: step 5/5. Functionally, catalyzes the complicated ring closure reaction between the two acyclic compounds 1-deoxy-D-xylulose-5-phosphate (DXP) and 3-amino-2-oxopropyl phosphate (1-amino-acetone-3-phosphate or AAP) to form pyridoxine 5'-phosphate (PNP) and inorganic phosphate. The protein is Pyridoxine 5'-phosphate synthase of Microcystis aeruginosa (strain NIES-843 / IAM M-2473).